The following is a 172-amino-acid chain: NADH-quinone oxidoreductase subunit B (172 aa).

[4Fe-4S] cluster contacts are provided by C46, C47, C111, and C141.

This sequence belongs to the complex I 20 kDa subunit family. NDH-1 is composed of 14 different subunits. Subunits NuoB, C, D, E, F, and G constitute the peripheral sector of the complex. The cofactor is [4Fe-4S] cluster.

It localises to the cell membrane. The enzyme catalyses a quinone + NADH + 5 H(+)(in) = a quinol + NAD(+) + 4 H(+)(out). NDH-1 shuttles electrons from NADH, via FMN and iron-sulfur (Fe-S) centers, to quinones in the respiratory chain. The immediate electron acceptor for the enzyme in this species is believed to be a menaquinone. Couples the redox reaction to proton translocation (for every two electrons transferred, four hydrogen ions are translocated across the cytoplasmic membrane), and thus conserves the redox energy in a proton gradient. The protein is NADH-quinone oxidoreductase subunit B of Bacillus cytotoxicus (strain DSM 22905 / CIP 110041 / 391-98 / NVH 391-98).